The primary structure comprises 173 residues: Flavodoxin (173 aa).

In terms of domain architecture, Flavodoxin-like spans 2–168; it reads IGIFFSTSTG…RVAGWVEAVV (167 aa).

It belongs to the flavodoxin family. Requires FMN as cofactor.

Low-potential electron donor to a number of redox enzymes. The protein is Flavodoxin of Chondrus crispus (Carrageen Irish moss).